The primary structure comprises 617 residues: Leucine aminopeptidase 2 (617 aa).

A peptide is bound by residues Q139–Q141 and P271–E276. Zn(2+) is bound at residue H300. E301 acts as the Proton acceptor in catalysis. Positions 304 and 323 each coordinate Zn(2+). Y388 functions as the Proton donor in the catalytic mechanism.

This sequence belongs to the peptidase M1 family. The cofactor is Zn(2+).

It is found in the cytoplasm. It localises to the nucleus. It carries out the reaction an epoxide + H2O = an ethanediol. Functionally, aminopeptidase that preferentially cleaves di- and tripeptides. Also has low epoxide hydrolase activity (in vitro). Can hydrolyze the epoxide leukotriene LTA(4) but it forms preferentially 5,6-dihydroxy-7,9,11,14-eicosatetraenoic acid rather than the cytokine leukotriene B(4) as the product compared to the homologous mammalian enzyme (in vitro). The protein is Leucine aminopeptidase 2 of Aspergillus terreus (strain NIH 2624 / FGSC A1156).